A 271-amino-acid chain; its full sequence is uncharacterized protein (271 aa).

A run of 3 helical transmembrane segments spans residues 11-33 (GWLA…LAPW), 172-194 (SINT…LQLI), and 214-236 (FLSY…GYFA). Residues 245–271 (REKAGSPPPDKPMTVEQKLADRYGRRR) form a disordered region. Positions 262-271 (KLADRYGRRR) are enriched in basic and acidic residues.

Belongs to the SURF1 family.

The protein resides in the cell membrane. This is an uncharacterized protein from Mycobacterium tuberculosis (strain CDC 1551 / Oshkosh).